Reading from the N-terminus, the 523-residue chain is Solute carrier family 2, facilitated glucose transporter member 2 (523 aa).

Residues M1–L10 are Cytoplasmic-facing. The chain crosses the membrane as a helical span at residues A11–I31. Topologically, residues N32–S97 are extracellular. The N-linked (GlcNAc...) asparagine glycan is linked to N62. The helical transmembrane segment at L98 to G118 threads the bilayer. Over D119–A126 the chain is Cytoplasmic. Residues M127 to G147 traverse the membrane as a helical segment. Residues P148–R157 are Extracellular-facing. The helical transmembrane segment at S158–I178 threads the bilayer. The Cytoplasmic portion of the chain corresponds to A179 to A186. A helical transmembrane segment spans residues L187–L207. Q192 serves as a coordination point for D-glucose. Residues S208–H216 are Extracellular-facing. Residues W217–F237 traverse the membrane as a helical segment. Over C238–P302 the chain is Cytoplasmic. Residues I303–Y323 traverse the membrane as a helical segment. D-glucose is bound by residues Q313–Q314 and N319. Over Y324–P337 the chain is Extracellular. Residues V338–L358 form a helical membrane-spanning segment. N348 lines the D-glucose pocket. Residues V359–L367 are Cytoplasmic-facing. A helical membrane pass occupies residues F368–L388. The Extracellular portion of the chain corresponds to L389–T401. Residues A402–V422 traverse the membrane as a helical segment. 2 residues coordinate D-glucose: E411 and W419. Topologically, residues A423–P432 are cytoplasmic. A helical transmembrane segment spans residues T433–F453. Topologically, residues Q454 to L460 are extracellular. The chain crosses the membrane as a helical span at residues G461–F481. Topologically, residues K482–V523 are cytoplasmic. The residue at position 522 (S522) is a Phosphoserine.

It belongs to the major facilitator superfamily. Sugar transporter (TC 2.A.1.1) family. Glucose transporter subfamily. N-glycosylated; required for stability and retention at the cell surface of pancreatic beta cells. In terms of tissue distribution, in embryo, expressed in endoderm layer of yolk sac and liver primordium.

Its subcellular location is the cell membrane. It carries out the reaction D-glucose(out) = D-glucose(in). The catalysed reaction is D-fructose(out) = D-fructose(in). The enzyme catalyses L-dehydroascorbate(out) = L-dehydroascorbate(in). It catalyses the reaction D-galactose(in) = D-galactose(out). With respect to regulation, D-glucose and maltose competitively inhibit fructose transport. D-glucose, D-fructose and maltose inhibit deoxyglucose transport. Facilitative hexose transporter that mediates the transport of glucose, fructose and galactose. Likely mediates the bidirectional transfer of glucose across the plasma membrane of hepatocytes and is responsible for uptake of glucose by the beta cells; may comprise part of the glucose-sensing mechanism of the beta cell. May also participate with the Na(+)/glucose cotransporter in the transcellular transport of glucose in the small intestine and kidney. Also able to mediate the transport of dehydroascorbate. This is Solute carrier family 2, facilitated glucose transporter member 2 from Mus musculus (Mouse).